Consider the following 408-residue polypeptide: Peptidase T (408 aa).

Histidine 81 provides a ligand contact to Zn(2+). Aspartate 83 is a catalytic residue. Aspartate 142 provides a ligand contact to Zn(2+). Catalysis depends on glutamate 176, which acts as the Proton acceptor. Residues glutamate 177, aspartate 199, and histidine 381 each contribute to the Zn(2+) site.

The protein belongs to the peptidase M20B family. Zn(2+) serves as cofactor.

It localises to the cytoplasm. The catalysed reaction is Release of the N-terminal residue from a tripeptide.. In terms of biological role, cleaves the N-terminal amino acid of tripeptides. In Streptococcus gordonii (strain Challis / ATCC 35105 / BCRC 15272 / CH1 / DL1 / V288), this protein is Peptidase T.